The chain runs to 91 residues: UPF0250 protein PputGB1_4855 (91 aa).

It belongs to the UPF0250 family.

The chain is UPF0250 protein PputGB1_4855 from Pseudomonas putida (strain GB-1).